A 421-amino-acid polypeptide reads, in one-letter code: Shaggy-related protein kinase kappa (421 aa).

Residues 1 to 10 (MASSGLGNGV) are compositionally biased toward gly residues. The disordered stretch occupies residues 1 to 60 (MASSGLGNGVGTSRSAKGLKSSSSSVDWLTRDLAETRIRDKVETDDERDSEPDIIDGAGA). The segment covering 29–42 (LTRDLAETRIRDKV) has biased composition (basic and acidic residues). The segment covering 43-54 (ETDDERDSEPDI) has biased composition (acidic residues). Residues 83-367 (YISEHVVGTG…ALEACIHPLF (285 aa)) form the Protein kinase domain. Residues 89-97 (VGTGSFGMV) and Lys112 contribute to the ATP site. Asp208 serves as the catalytic Proton acceptor. Tyr243 is modified (phosphotyrosine).

Belongs to the protein kinase superfamily. CMGC Ser/Thr protein kinase family. GSK-3 subfamily. In terms of processing, autophosphorylated mainly on threonine and serine residues. In terms of tissue distribution, expressed exclusively in inflorescences.

The enzyme catalyses L-seryl-[protein] + ATP = O-phospho-L-seryl-[protein] + ADP + H(+). The catalysed reaction is L-threonyl-[protein] + ATP = O-phospho-L-threonyl-[protein] + ADP + H(+). In terms of biological role, may mediate extracellular signals to regulate transcription in differentiating cells. This chain is Shaggy-related protein kinase kappa (ASK10), found in Arabidopsis thaliana (Mouse-ear cress).